The primary structure comprises 202 residues: Holliday junction branch migration complex subunit RuvA (202 aa).

Residues 1–64 (MIGRLRGSLA…EDAHLLYGFY (64 aa)) are domain I. The segment at 65–143 (EKRERELFRE…AWESLPGTFT (79 aa)) is domain II. The tract at residues 144–153 (LVSNGPNQAE) is flexible linker. A domain III region spans residues 154–202 (PVASAESDAVSALISLGYKPQEASKAVSAIKEKDLSSADLIRRALKGMG).

This sequence belongs to the RuvA family. Homotetramer. Forms an RuvA(8)-RuvB(12)-Holliday junction (HJ) complex. HJ DNA is sandwiched between 2 RuvA tetramers; dsDNA enters through RuvA and exits via RuvB. An RuvB hexamer assembles on each DNA strand where it exits the tetramer. Each RuvB hexamer is contacted by two RuvA subunits (via domain III) on 2 adjacent RuvB subunits; this complex drives branch migration. In the full resolvosome a probable DNA-RuvA(4)-RuvB(12)-RuvC(2) complex forms which resolves the HJ.

The protein resides in the cytoplasm. The RuvA-RuvB-RuvC complex processes Holliday junction (HJ) DNA during genetic recombination and DNA repair, while the RuvA-RuvB complex plays an important role in the rescue of blocked DNA replication forks via replication fork reversal (RFR). RuvA specifically binds to HJ cruciform DNA, conferring on it an open structure. The RuvB hexamer acts as an ATP-dependent pump, pulling dsDNA into and through the RuvAB complex. HJ branch migration allows RuvC to scan DNA until it finds its consensus sequence, where it cleaves and resolves the cruciform DNA. The chain is Holliday junction branch migration complex subunit RuvA from Pseudomonas savastanoi pv. phaseolicola (strain 1448A / Race 6) (Pseudomonas syringae pv. phaseolicola (strain 1448A / Race 6)).